The sequence spans 397 residues: CCA-adding enzyme (397 aa).

ATP contacts are provided by glycine 26 and arginine 29. Positions 26 and 29 each coordinate CTP. Aspartate 39 and aspartate 41 together coordinate Mg(2+). Residues arginine 110, aspartate 153, arginine 156, arginine 159, and arginine 162 each coordinate ATP. CTP-binding residues include arginine 110, aspartate 153, arginine 156, arginine 159, and arginine 162.

It belongs to the tRNA nucleotidyltransferase/poly(A) polymerase family. Bacterial CCA-adding enzyme type 3 subfamily. As to quaternary structure, homodimer. Mg(2+) is required as a cofactor.

The enzyme catalyses a tRNA precursor + 2 CTP + ATP = a tRNA with a 3' CCA end + 3 diphosphate. It carries out the reaction a tRNA with a 3' CCA end + 2 CTP + ATP = a tRNA with a 3' CCACCA end + 3 diphosphate. Catalyzes the addition and repair of the essential 3'-terminal CCA sequence in tRNAs without using a nucleic acid template. Adds these three nucleotides in the order of C, C, and A to the tRNA nucleotide-73, using CTP and ATP as substrates and producing inorganic pyrophosphate. tRNA 3'-terminal CCA addition is required both for tRNA processing and repair. Also involved in tRNA surveillance by mediating tandem CCA addition to generate a CCACCA at the 3' terminus of unstable tRNAs. While stable tRNAs receive only 3'-terminal CCA, unstable tRNAs are marked with CCACCA and rapidly degraded. The polypeptide is CCA-adding enzyme (Bacillus cereus (strain G9842)).